A 311-amino-acid chain; its full sequence is Meteorin-like protein (311 aa).

The signal sequence occupies residues 1-45; the sequence is MRGAVWAARRRAGQQWPRSPGPGPGPPPPPPLLLLLLLLLGGASA. Cysteines 52 and 75 form a disulfide. An N-linked (GlcNAc...) asparagine glycan is attached at Asn103. Intrachain disulfides connect Cys107–Cys143, Cys188–Cys260, Cys191–Cys284, and Cys201–Cys306.

The protein belongs to the meteorin family. N-glycosylated. In terms of tissue distribution, highly expressed in subcutaneous adipose tissue.

The protein localises to the secreted. Functionally, hormone induced following exercise or cold exposure that promotes energy expenditure. Induced either in the skeletal muscle after exercise or in adipose tissue following cold exposure and is present in the circulation. Able to stimulate energy expenditure associated with the browning of the white fat depots and improves glucose tolerance. Does not promote an increase in a thermogenic gene program via direct action on adipocytes, but acts by stimulating several immune cell subtypes to enter the adipose tissue and activate their prothermogenic actions. Stimulates an eosinophil-dependent increase in IL4 expression and promotes alternative activation of adipose tissue macrophages, which are required for the increased expression of the thermogenic and anti-inflammatory gene programs in fat. Required for some cold-induced thermogenic responses, suggesting a role in metabolic adaptations to cold temperatures. This is Meteorin-like protein (Metrnl) from Mus musculus (Mouse).